A 166-amino-acid polypeptide reads, in one-letter code: Transcriptional repressor NrdR (166 aa).

Residues 3–34 fold into a zinc finger; the sequence is CPHCHHNGSRVVDSRPTDDGRVIRRRRECESC. Positions 49-139 constitute an ATP-cone domain; the sequence is LLVIKKNGTR…VYRQFKDTGV (91 aa).

It belongs to the NrdR family. The cofactor is Zn(2+).

Negatively regulates transcription of bacterial ribonucleotide reductase nrd genes and operons by binding to NrdR-boxes. The polypeptide is Transcriptional repressor NrdR (Levilactobacillus brevis (strain ATCC 367 / BCRC 12310 / CIP 105137 / JCM 1170 / LMG 11437 / NCIMB 947 / NCTC 947) (Lactobacillus brevis)).